The primary structure comprises 405 residues: Plasma serine protease inhibitor (405 aa).

Residues 1–19 (MRFFPILCLVLFISHGVAS) form the signal peptide. The propeptide at 20–24 (RRHSH) is removed in mature form. The N-linked (GlcNAc...) asparagine glycan is linked to N247.

The protein belongs to the serpin family. As to quaternary structure, forms protease inhibiting heterodimers in extracellular body fluids with serine proteases such as activated protein C/coagulation factor V/F5, acrosin/ACR, chymotrypsinogen B/CTRB1, prothrombin/F2, factor Xa/F10, factor XI/F11, kallikrein/KLKB1, tissue kallikrein, trypsin/PRSS1, prostate specific antigen/KLK3, tissue plasminogen activator/PLAT and urinary plasminogen activator/PLAU. Forms membrane-anchored serine proteases inhibiting heterodimers with TMPRSS7 and TMPRSS11E. Interacts with SEMG2. In terms of processing, N-glycosylated; glycans consist of a mixture of sialylated bi- (including sialyl-Lewis X epitopes), tri- and tetra-antennary complex-type chains; affects the maximal heparin- and thrombomodulin-enhanced rates of thrombin inhibition. O-glycosylated; further modified with 2 sialic acid residues. Proteolytically cleaved at the N-terminus; inhibits slightly the heparin- and thrombomodulin-enhanced rates of thrombin inhibition. Post-translationally, proteolytically cleaved. Inhibition of proteases is accompanied by formation of a stable enzyme-inhibitor complex and by degradation of the serpin to lower molecular weight derivatives. Not detected in blood plasma (at protein level). Expressed in testis, epididymis, seminal vesicles, prostate and ovaries.

The protein resides in the secreted. Its subcellular location is the extracellular space. With respect to regulation, its inhibitory activity is greatly enhanced in the presence of glycosaminoglycans, heparin, thrombomodulin and phospholipids vesicles. Heparin-dependent serine protease inhibitor acting in body fluids and secretions. Inactivates serine proteases by binding irreversibly to their serine activation site. Involved in the regulation of intravascular and extravascular proteolytic activities. Plays hemostatic roles in the blood plasma. Acts as a procoagulant and pro-inflammatory factor by inhibiting the anticoagulant activated protein C factor as well as the generation of activated protein C factor by the thrombin/thrombomodulin complex. Acts as an anticoagulant factor by inhibiting blood coagulation factors like prothrombin, factor XI, factor Xa, plasma kallikrein and fibrinolytic enzymes such as tissue- and urinary-type plasminogen activators. In seminal plasma, inactivates several serine proteases implicated in the reproductive system. Inhibits the serpin acrosin; indirectly protects component of the male genital tract from being degraded by excessive released acrosin. Inhibits tissue- and urinary-type plasminogen activator, prostate-specific antigen and kallikrein activities; has a control on the sperm motility and fertilization. Inhibits the activated protein C-catalyzed degradation of SEMG1 and SEMG2; regulates the degradation of semenogelin during the process of transfer of spermatozoa from the male reproductive tract into the female tract. In urine, inhibits urinary-type plasminogen activator and kallikrein activities. Inactivates membrane-anchored serine proteases activities such as MPRSS7 and TMPRSS11E. Inhibits urinary-type plasminogen activator-dependent tumor cell invasion and metastasis. May also play a non-inhibitory role in seminal plasma and urine as a hydrophobic hormone carrier by its binding to retinoic acid. The polypeptide is Plasma serine protease inhibitor (Serpina5) (Mus musculus (Mouse)).